The sequence spans 483 residues: Lipoamide acyltransferase component of branched-chain alpha-keto acid dehydrogenase complex, mitochondrial (483 aa).

The N-terminal 75 residues, 1 to 75 (MIARRIWRSH…AMATDSNSGL (75 aa)), are a transit peptide targeting the mitochondrion. A Lipoyl-binding domain is found at 76–150 (IDVPLAQTGE…KVGETLVRLA (75 aa)). At Lys116 the chain carries N6-lipoyllysine. Residues 183-220 (LSTPAVRNLAKDLGIDINVITGTGKDGRVLKEDVLRFS) form the Peripheral subunit-binding (PSBD) domain. Residues His453 and Asp457 contribute to the active site.

It belongs to the 2-oxoacid dehydrogenase family. As to quaternary structure, forms a 24-polypeptide structural core with octahedral symmetry. It depends on (R)-lipoate as a cofactor. Expressed in the non-photosynthetic organs such as siliques, flowers and roots.

Its subcellular location is the mitochondrion matrix. It carries out the reaction N(6)-[(R)-dihydrolipoyl]-L-lysyl-[protein] + 2-methylpropanoyl-CoA = N(6)-[(R)-S(8)-2-methylpropanoyldihydrolipoyl]-L-lysyl-[protein] + CoA. Its function is as follows. The branched-chain alpha-keto dehydrogenase complex catalyzes the overall conversion of alpha-keto acids to acyl-CoA and CO(2). It contains multiple copies of three enzymatic components: branched-chain alpha-keto acid decarboxylase (E1), lipoamide acyltransferase (E2) and lipoamide dehydrogenase (E3). Within this complex, the catalytic function of this enzyme is to accept, and to transfer to coenzyme A, acyl groups that are generated by the branched-chain alpha-keto acid decarboxylase component. Required during sugar starvation and acts under the control of a sugar-sensing mechanism involving Ser/Thr kinases and phosphatases. This chain is Lipoamide acyltransferase component of branched-chain alpha-keto acid dehydrogenase complex, mitochondrial (BCE2), found in Arabidopsis thaliana (Mouse-ear cress).